We begin with the raw amino-acid sequence, 336 residues long: Holliday junction branch migration complex subunit RuvB (336 aa).

Residues 1–182 are large ATPase domain (RuvB-L); the sequence is MKERIVNLET…FGMSFRMQFY (182 aa). Residues leucine 21, arginine 22, glycine 63, lysine 66, threonine 67, serine 68, 129-131, arginine 172, tyrosine 182, and arginine 219 each bind ATP; that span reads EDF. Threonine 67 lines the Mg(2+) pocket. Residues 183–253 are small ATPAse domain (RuvB-S); that stretch reads SPSELSLIIK…ITLHALNELG (71 aa). Residues 256-336 form a head domain (RuvB-H) region; the sequence is ELGFDEADLA…IPTLNPQTLF (81 aa). DNA-binding residues include arginine 310 and arginine 315.

This sequence belongs to the RuvB family. Homohexamer. Forms an RuvA(8)-RuvB(12)-Holliday junction (HJ) complex. HJ DNA is sandwiched between 2 RuvA tetramers; dsDNA enters through RuvA and exits via RuvB. An RuvB hexamer assembles on each DNA strand where it exits the tetramer. Each RuvB hexamer is contacted by two RuvA subunits (via domain III) on 2 adjacent RuvB subunits; this complex drives branch migration. In the full resolvosome a probable DNA-RuvA(4)-RuvB(12)-RuvC(2) complex forms which resolves the HJ.

It is found in the cytoplasm. The enzyme catalyses ATP + H2O = ADP + phosphate + H(+). Its function is as follows. The RuvA-RuvB-RuvC complex processes Holliday junction (HJ) DNA during genetic recombination and DNA repair, while the RuvA-RuvB complex plays an important role in the rescue of blocked DNA replication forks via replication fork reversal (RFR). RuvA specifically binds to HJ cruciform DNA, conferring on it an open structure. The RuvB hexamer acts as an ATP-dependent pump, pulling dsDNA into and through the RuvAB complex. RuvB forms 2 homohexamers on either side of HJ DNA bound by 1 or 2 RuvA tetramers; 4 subunits per hexamer contact DNA at a time. Coordinated motions by a converter formed by DNA-disengaged RuvB subunits stimulates ATP hydrolysis and nucleotide exchange. Immobilization of the converter enables RuvB to convert the ATP-contained energy into a lever motion, pulling 2 nucleotides of DNA out of the RuvA tetramer per ATP hydrolyzed, thus driving DNA branch migration. The RuvB motors rotate together with the DNA substrate, which together with the progressing nucleotide cycle form the mechanistic basis for DNA recombination by continuous HJ branch migration. Branch migration allows RuvC to scan DNA until it finds its consensus sequence, where it cleaves and resolves cruciform DNA. This Helicobacter pylori (strain P12) protein is Holliday junction branch migration complex subunit RuvB.